The chain runs to 620 residues: Magnesium-chelatase 67 kDa subunit (620 aa).

33–40 (STVGSGKS) is an ATP binding site. A disordered region spans residues 272 to 322 (ATRMPEREPNPEEMAQDEPPPQEEQPQDEAEDQNAPPDEADSDADEEQEET). The segment covering 296-322 (QPQDEAEDQNAPPDEADSDADEEQEET) has biased composition (acidic residues). The VWFA domain occupies 432-620 (LFIFMVDASG…AEQIVEAALS (189 aa)).

The protein belongs to the Mg-chelatase subunits D/I family.

The enzyme catalyses protoporphyrin IX + Mg(2+) + ATP + H2O = Mg-protoporphyrin IX + ADP + phosphate + 3 H(+). It functions in the pathway porphyrin-containing compound metabolism; bacteriochlorophyll biosynthesis. Functionally, involved in bacteriochlorophyll biosynthesis; introduces a magnesium ion into protoporphyrin IX to yield Mg-protoporphyrin IX. The polypeptide is Magnesium-chelatase 67 kDa subunit (bchD) (Chlorobaculum tepidum (strain ATCC 49652 / DSM 12025 / NBRC 103806 / TLS) (Chlorobium tepidum)).